The following is a 1201-amino-acid chain: HEAT repeat-containing protein 6 (1201 aa).

The tract at residues 1–25 (MAGKVTFLGSNSSFSPDGKTQGFKS) is disordered. An HEAT 1 repeat occupies 182-221 (PDLLGPSGVLVKYGDPKQPDIELRRSAVHCIANLCLSVPS). The disordered stretch occupies residues 321–390 (AVKPEPAQDT…SQSSMLTSPS (70 aa)). Residues 341 to 352 (QKKRKSRGKGKK) are compositionally biased toward basic residues. Residues 375–390 (SGWSHGSQSSMLTSPS) show a composition bias toward polar residues. HEAT repeat units lie at residues 460 to 498 (GIGG…GSRQ), 523 to 560 (SIRE…NVPY), and 566 to 603 (GLLS…TQAP). The span at 618-633 (SSLGSGISTPQESPLS) shows a compositional bias: polar residues. Residues 618–653 (SSLGSGISTPQESPLSWRQPARRDEEASSPAAAEGP) form a disordered region.

This Danio rerio (Zebrafish) protein is HEAT repeat-containing protein 6 (heatr6).